A 447-amino-acid chain; its full sequence is Tubulin beta-1 chain (447 aa).

Residues Gln-11, Glu-69, Ser-138, Gly-142, Thr-143, Gly-144, Asn-204, and Asn-226 each coordinate GTP. Glu-69 serves as a coordination point for Mg(2+). The segment at 428-447 is disordered; the sequence is ATADEDAEFDEEQEQEIEDN. Acidic residues predominate over residues 429–447; that stretch reads TADEDAEFDEEQEQEIEDN.

Belongs to the tubulin family. Dimer of alpha and beta chains. A typical microtubule is a hollow water-filled tube with an outer diameter of 25 nm and an inner diameter of 15 nM. Alpha-beta heterodimers associate head-to-tail to form protofilaments running lengthwise along the microtubule wall with the beta-tubulin subunit facing the microtubule plus end conferring a structural polarity. Microtubules usually have 13 protofilaments but different protofilament numbers can be found in some organisms and specialized cells. Mg(2+) is required as a cofactor.

It is found in the cytoplasm. The protein localises to the cytoskeleton. Functionally, tubulin is the major constituent of microtubules, a cylinder consisting of laterally associated linear protofilaments composed of alpha- and beta-tubulin heterodimers. Microtubules grow by the addition of GTP-tubulin dimers to the microtubule end, where a stabilizing cap forms. Below the cap, tubulin dimers are in GDP-bound state, owing to GTPase activity of alpha-tubulin. The polypeptide is Tubulin beta-1 chain (Manduca sexta (Tobacco hawkmoth)).